The following is a 1534-amino-acid chain: Alpha-2-macroglobulin homolog (1534 aa).

Positions 1–38 are cleaved as a signal peptide; sequence MDTQRFQSQFHWHLSFKFSGAIAACLSLSLVGTGLANA.

This sequence belongs to the protease inhibitor I39 (alpha-2-macroglobulin) family. Bacterial alpha-2-macroglobulin subfamily.

The polypeptide is Alpha-2-macroglobulin homolog (yfaS) (Escherichia coli O157:H7).